A 646-amino-acid chain; its full sequence is MAAESGSDFQQRRRRRRDPEEPEKTELSERELAVAVAVSQENDEENEERWVGPLPVEATLAKKRKVLEFERVYLDNLPSASMYERSYMHRDVITHVVCTKTDFIITASHDGHVKFWKKIEEGIEFVKHFRSHLGVIESIAVSSEGALFCSVGDDKAMKVFDVVNFDMINMLKLGYFPGQCEWIYCPGDAISSVAASEKSTGKIFIYDGRGDNQPLHIFDKLHTSPLTQIRLNPVYKAVVSSDKSGMIEYWTGPPHEYKFPKNVNWEYKTDTDLYEFAKCKAYPTSVCFSPDGKKIATIGSDRKVRIFRFVTGKLMRVFDESLSMFTELQQMRQQLPDMEFGRRMAVERELEKVDAVRLINIVFDETGHFVLYGTMLGIKVINVETNRCVRILGKQENIRVMQLALFQGIAKKHRAATTIEMKASENPVLQNIQADPTIVCTSFKKNRFYMFTKREPEDTKSADSDRDVFNEKPSKEEVMAATQAEGPKRVSDSAIIHTSMGDIHTKLFPVECPKTVENFCVHSRNGYYNGHTFHRIIKGFMIQTGDPTGTGMGGESIWGGEFEDEFHSTLRHDRPYTLSMANAGSNTNGSQFFITVVPTPWLDNKHTVFGRVTKGMEVVQRISNVKVNPKTDKPYEDVSIINITVK.

Residues 1–30 are disordered; the sequence is MAAESGSDFQQRRRRRRDPEEPEKTELSER. Ala-2 is subject to N-acetylalanine. The span at 17–30 shows a compositional bias: basic and acidic residues; it reads RDPEEPEKTELSER. 7 WD repeats span residues 80–118, 124–162, 168–208, 213–252, 271–309, 345–386, and 401–453; these read ASMY…FWKK, EFVK…VFDV, INML…IYDG, QPLH…YWTG, TDLY…IFRF, AVER…VETN, and MQLA…MFTK. Over residues 455–478 the composition is skewed to basic and acidic residues; that stretch reads EPEDTKSADSDRDVFNEKPSKEEV. The interval 455 to 490 is disordered; sequence EPEDTKSADSDRDVFNEKPSKEEVMAATQAEGPKRV. A PPIase cyclophilin-type domain is found at 490–645; the sequence is VSDSAIIHTS…EDVSIINITV (156 aa).

This sequence belongs to the cyclophilin-type PPIase family. PPIL1 subfamily. Identified in the spliceosome C complex.

Its subcellular location is the nucleus. It catalyses the reaction [protein]-peptidylproline (omega=180) = [protein]-peptidylproline (omega=0). Its activity is regulated as follows. Inhibited by cyclosporin A (CsA). In terms of biological role, PPIase that catalyzes the cis-trans isomerization of proline imidic peptide bonds in oligopeptides and may therefore assist protein folding. May be involved in pre-mRNA splicing. The polypeptide is Peptidylprolyl isomerase domain and WD repeat-containing protein 1 (Homo sapiens (Human)).